The sequence spans 496 residues: Cytochrome P450 71D180 (496 aa).

A helical; Signal-anchor for type II membrane protein membrane pass occupies residues 1-21 (MDISISWVVIIVFVLSYLILM). A heme-binding site is contributed by cysteine 435. The disordered stretch occupies residues 471 to 496 (MSETPGLSGPRKNPLIMIPTIHNPTS).

The protein belongs to the cytochrome P450 family. Requires heme as cofactor. In terms of tissue distribution, mostly expressed in flowers and stems, and, to a lower extent, in leaves.

The protein resides in the membrane. It catalyses the reaction gamma-terpinene + 2 reduced [NADPH--hemoprotein reductase] + 2 O2 = carvacrol + 2 oxidized [NADPH--hemoprotein reductase] + 3 H2O + 2 H(+). The catalysed reaction is (4S)-limonene + reduced [NADPH--hemoprotein reductase] + O2 = (1S,5R)-carveol + oxidized [NADPH--hemoprotein reductase] + H2O + H(+). The enzyme catalyses (4R)-limonene + reduced [NADPH--hemoprotein reductase] + O2 = (1R,5S)-carveol + oxidized [NADPH--hemoprotein reductase] + H2O + H(+). It functions in the pathway secondary metabolite biosynthesis; terpenoid biosynthesis. Involved in the biosynthesis of phenolic monoterpenes natural products thymol and carvacrol which have a broad range of biological activities acting as antimicrobial compounds, insecticides, antioxidants and pharmaceutical agents. Catalyzes the C2-hydroxylation of gamma-terpinene to produce carvacrol. Also mediates the C6-hydroxylation of (4S)-limonene and (4R)-limonene to form carveol. This chain is Cytochrome P450 71D180, found in Origanum vulgare (Wild marjoram).